The sequence spans 143 residues: Ribosome maturation factor RimP (143 aa).

The protein belongs to the RimP family.

It is found in the cytoplasm. Its function is as follows. Required for maturation of 30S ribosomal subunits. This is Ribosome maturation factor RimP from Borrelia turicatae (strain 91E135).